The following is a 164-amino-acid chain: UPF0114 protein Spro_2386 (164 aa).

Helical transmembrane passes span 15 to 35 (LLAP…IKFF), 53 to 73 (LVLT…LVMV), and 136 to 156 (LMWY…MGYL).

This sequence belongs to the UPF0114 family.

It is found in the cell membrane. The polypeptide is UPF0114 protein Spro_2386 (Serratia proteamaculans (strain 568)).